A 362-amino-acid polypeptide reads, in one-letter code: Probable dual-specificity RNA methyltransferase RlmN (362 aa).

The active-site Proton acceptor is glutamate 105. A Radical SAM core domain is found at 111-344; the sequence is HEYGNSICVT…VTIRREQGHD (234 aa). An intrachain disulfide couples cysteine 118 to cysteine 349. Residues cysteine 125, cysteine 129, and cysteine 132 each coordinate [4Fe-4S] cluster. Residues 175–176, serine 207, 230–232, and asparagine 306 each bind S-adenosyl-L-methionine; these read GE and SLH. Cysteine 349 (S-methylcysteine intermediate) is an active-site residue.

It belongs to the radical SAM superfamily. RlmN family. It depends on [4Fe-4S] cluster as a cofactor.

It localises to the cytoplasm. The enzyme catalyses adenosine(2503) in 23S rRNA + 2 reduced [2Fe-2S]-[ferredoxin] + 2 S-adenosyl-L-methionine = 2-methyladenosine(2503) in 23S rRNA + 5'-deoxyadenosine + L-methionine + 2 oxidized [2Fe-2S]-[ferredoxin] + S-adenosyl-L-homocysteine. It carries out the reaction adenosine(37) in tRNA + 2 reduced [2Fe-2S]-[ferredoxin] + 2 S-adenosyl-L-methionine = 2-methyladenosine(37) in tRNA + 5'-deoxyadenosine + L-methionine + 2 oxidized [2Fe-2S]-[ferredoxin] + S-adenosyl-L-homocysteine. Functionally, specifically methylates position 2 of adenine 2503 in 23S rRNA and position 2 of adenine 37 in tRNAs. The polypeptide is Probable dual-specificity RNA methyltransferase RlmN (Bacillus cereus (strain ATCC 14579 / DSM 31 / CCUG 7414 / JCM 2152 / NBRC 15305 / NCIMB 9373 / NCTC 2599 / NRRL B-3711)).